The following is a 228-amino-acid chain: MMMSLFNTFESPYFLGFPLMIFIAILISLTMFIPDNNLLIKNQSSMLASTFLKTMTKEIFSPIKKSGHSWALLLMTTLMFIFLNNITGLLPYTFTVTSQLSLNMAMAIPLWLGTIIMGATSQPSHSLAHLLPEGTPMTLAPFLIVIESISIIIRPLALGVRLTANITAGHLLIHLVSLALINLTKSLPLLFLTFSVFILLLILELAVSFIQAYVFVMLVSLYLEENLI.

Transmembrane regions (helical) follow at residues 13-33 (YFLG…TMFI), 70-90 (WALL…TGLL), 100-120 (LSLN…MGAT), 140-160 (APFL…ALGV), 162-182 (LTAN…ALIN), and 190-210 (LFLT…VSFI).

It belongs to the ATPase A chain family. In terms of assembly, component of the ATP synthase complex composed at least of ATP5F1A/subunit alpha, ATP5F1B/subunit beta, ATP5MC1/subunit c (homooctomer), MT-ATP6/subunit a, MT-ATP8/subunit 8, ATP5ME/subunit e, ATP5MF/subunit f, ATP5MG/subunit g, ATP5MK/subunit k, ATP5MJ/subunit j, ATP5F1C/subunit gamma, ATP5F1D/subunit delta, ATP5F1E/subunit epsilon, ATP5PF/subunit F6, ATP5PB/subunit b, ATP5PD/subunit d, ATP5PO/subunit OSCP. ATP synthase complex consists of a soluble F(1) head domain (subunits alpha(3) and beta(3)) - the catalytic core - and a membrane F(0) domain - the membrane proton channel (subunits c, a, 8, e, f, g, k and j). These two domains are linked by a central stalk (subunits gamma, delta, and epsilon) rotating inside the F1 region and a stationary peripheral stalk (subunits F6, b, d, and OSCP). Interacts with DNAJC30; interaction is direct.

Its subcellular location is the mitochondrion inner membrane. It carries out the reaction H(+)(in) = H(+)(out). Subunit a, of the mitochondrial membrane ATP synthase complex (F(1)F(0) ATP synthase or Complex V) that produces ATP from ADP in the presence of a proton gradient across the membrane which is generated by electron transport complexes of the respiratory chain. ATP synthase complex consist of a soluble F(1) head domain - the catalytic core - and a membrane F(1) domain - the membrane proton channel. These two domains are linked by a central stalk rotating inside the F(1) region and a stationary peripheral stalk. During catalysis, ATP synthesis in the catalytic domain of F(1) is coupled via a rotary mechanism of the central stalk subunits to proton translocation. With the subunit c (ATP5MC1), forms the proton-conducting channel in the F(0) domain, that contains two crucial half-channels (inlet and outlet) that facilitate proton movement from the mitochondrial intermembrane space (IMS) into the matrix. Protons are taken up via the inlet half-channel and released through the outlet half-channel, following a Grotthuss mechanism. The chain is ATP synthase F(0) complex subunit a from Myxine glutinosa (Atlantic hagfish).